Here is a 757-residue protein sequence, read N- to C-terminus: MSTANRLATIAGQVSKAIAPQWPLSQWIAVNPFWHYRQQPVAGVAAHWRYSAGTRLLMSPDFYWQQWQQNRIDAALVTNKMVNELEQRSLLKAQLPQWRNLSRLVDKYTRRRRKMRWNDEVVLQISQTCGLFMQFPTRFQQAGKDSSLYQHWLTISRADRGIETLMDEAELTELFAQLPDDPHKLIQVCHDNFLSDASDYALRCYSQALISDLWGWAAAFSYQDARQDSQWVFELLCIRLAWEYILWQLAERTNTKVYQQLQQALSAQVENCEGQVAHIEQHNSLLWQWQAAYERSQLNRLQFKSDTVEESNAPDVQAVFCIDVRSERYRRALEQAGKSLGSYVQSKGFAGFFGVPLAIQRKGRDVPHVPGLLQPAYYIKAPARKQSVGSLLSNMFNAPVSMFSGVEALGLSKLKSLLTGVPGQLATANNAYIADGSICEHNGEASMESLVGICQQALAGMQFTRFARHIVLVGHGSHHSNNAQRAGLNCGACGGQTGALSARVLVRLLNNQNIREHLREQGVAIPDATQFHSAMHETVTDKVIWLSNTVPDSVKQVFRAATEKLTQACGESEKDRKTRSGHWAELRPEWGLADNNVLFFGQADRLTSADTIGSNFLHDYNSINDPDGELLAQLMSAPGLVANWINWQYYCSVTEPKQLGSGNKLLHNRVANDIGVFEGNGGDLRQGLAWQSVHNGSDFVHRPMRLQVIVEADEATIQRALAKAVAFNELFEQQWINLHRLNARGELCPVTTPVTAK.

Positions 321, 323, 475, and 490 each coordinate Zn(2+).

This sequence belongs to the inorganic carbon transporter (TC 9.A.2) DabA family. In terms of assembly, forms a complex with DabB. It depends on Zn(2+) as a cofactor.

It localises to the cell inner membrane. In terms of biological role, part of an energy-coupled inorganic carbon pump. The protein is Probable inorganic carbon transporter subunit DabA of Idiomarina loihiensis (strain ATCC BAA-735 / DSM 15497 / L2-TR).